The following is a 417-amino-acid chain: NADH-quinone oxidoreductase subunit D (417 aa).

The protein belongs to the complex I 49 kDa subunit family. NDH-1 is composed of 14 different subunits. Subunits NuoB, C, D, E, F, and G constitute the peripheral sector of the complex.

It localises to the cell inner membrane. The enzyme catalyses a quinone + NADH + 5 H(+)(in) = a quinol + NAD(+) + 4 H(+)(out). Its function is as follows. NDH-1 shuttles electrons from NADH, via FMN and iron-sulfur (Fe-S) centers, to quinones in the respiratory chain. The immediate electron acceptor for the enzyme in this species is believed to be ubiquinone. Couples the redox reaction to proton translocation (for every two electrons transferred, four hydrogen ions are translocated across the cytoplasmic membrane), and thus conserves the redox energy in a proton gradient. The protein is NADH-quinone oxidoreductase subunit D of Burkholderia multivorans (strain ATCC 17616 / 249).